The chain runs to 1226 residues: DNA-directed RNA polymerase subunit beta (1226 aa).

This sequence belongs to the RNA polymerase beta chain family. As to quaternary structure, the RNAP catalytic core consists of 2 alpha, 1 beta, 1 beta' and 1 omega subunit. When a sigma factor is associated with the core the holoenzyme is formed, which can initiate transcription.

It catalyses the reaction RNA(n) + a ribonucleoside 5'-triphosphate = RNA(n+1) + diphosphate. DNA-dependent RNA polymerase catalyzes the transcription of DNA into RNA using the four ribonucleoside triphosphates as substrates. This chain is DNA-directed RNA polymerase subunit beta, found in Leptospira interrogans serogroup Icterohaemorrhagiae serovar Lai (strain 56601).